The primary structure comprises 258 residues: Flap endonuclease Xni (258 aa).

Aspartate 109 contributes to the Mg(2+) binding site. The 5'-3' exonuclease domain maps to 165-254 (VKPEQLPDYW…GFNLQDIRYL (90 aa)). Residues leucine 176, alanine 177, proline 185, isoleucine 187, and isoleucine 190 each coordinate K(+). The segment at 189 to 194 (GIGPKA) is interaction with DNA.

Belongs to the Xni family. The cofactor is Mg(2+). K(+) serves as cofactor.

In terms of biological role, has flap endonuclease activity. During DNA replication, flap endonucleases cleave the 5'-overhanging flap structure that is generated by displacement synthesis when DNA polymerase encounters the 5'-end of a downstream Okazaki fragment. This chain is Flap endonuclease Xni, found in Photobacterium profundum (strain SS9).